Consider the following 122-residue polypeptide: MNYLAVLVGGGVGALVRYLVSIFIQKFVPNFPLGTMVINTTGAFLIGFLSIYLTEVIDAPPNIRLLLITGFLGGYTTFSTFTLEGIGLINNGDYLKAFYYIVGTNVIGFLFVALGRFLGGLL.

4 helical membrane-spanning segments follow: residues 4 to 24 (LAVL…SIFI), 33 to 53 (LGTM…SIYL), 66 to 86 (LLIT…LEGI), and 95 to 115 (LKAF…VALG). Glycine 73 and threonine 76 together coordinate Na(+).

It belongs to the fluoride channel Fluc/FEX (TC 1.A.43) family.

Its subcellular location is the cell inner membrane. It carries out the reaction fluoride(in) = fluoride(out). Its activity is regulated as follows. Na(+) is not transported, but it plays an essential structural role and its presence is essential for fluoride channel function. In terms of biological role, fluoride-specific ion channel. Important for reducing fluoride concentration in the cell, thus reducing its toxicity. The protein is Fluoride-specific ion channel FluC of Hydrogenobaculum sp. (strain Y04AAS1).